The chain runs to 213 residues: LexA repressor 2 (213 aa).

Residues 27–47 constitute a DNA-binding region (H-T-H motif); the sequence is QTEIARAFGFKGVRAAQYHLE. Active-site for autocatalytic cleavage activity residues include S133 and K170.

This sequence belongs to the peptidase S24 family. Homodimer.

It catalyses the reaction Hydrolysis of Ala-|-Gly bond in repressor LexA.. Its function is as follows. Represses a number of genes involved in the response to DNA damage (SOS response), including recA and lexA. In the presence of single-stranded DNA, RecA interacts with LexA causing an autocatalytic cleavage which disrupts the DNA-binding part of LexA, leading to derepression of the SOS regulon and eventually DNA repair. This Xanthomonas oryzae pv. oryzae (strain KACC10331 / KXO85) protein is LexA repressor 2.